The sequence spans 818 residues: Phosphoenolpyruvate synthase (818 aa).

The Tele-phosphohistidine intermediate role is filled by His442. Substrate contacts are provided by Arg532, Arg601, Glu703, Gly724, Ser725, Asn726, and Asp727. Glu703 is a Mg(2+) binding site. Mg(2+) is bound at residue Asp727. Cys774 (proton donor) is an active-site residue.

It belongs to the PEP-utilizing enzyme family. Mg(2+) is required as a cofactor.

The catalysed reaction is pyruvate + ATP + H2O = phosphoenolpyruvate + AMP + phosphate + 2 H(+). The protein operates within carbohydrate biosynthesis; gluconeogenesis. Catalyzes the phosphorylation of pyruvate to phosphoenolpyruvate. This is Phosphoenolpyruvate synthase (ppsA) from Synechocystis sp. (strain ATCC 27184 / PCC 6803 / Kazusa).